Consider the following 434-residue polypeptide: Trigger factor (434 aa).

The PPIase FKBP-type domain occupies 160-245; the sequence is GDKVKMNFVG…LTEVQAAQLP (86 aa).

It belongs to the FKBP-type PPIase family. Tig subfamily.

It is found in the cytoplasm. The catalysed reaction is [protein]-peptidylproline (omega=180) = [protein]-peptidylproline (omega=0). In terms of biological role, involved in protein export. Acts as a chaperone by maintaining the newly synthesized protein in an open conformation. Functions as a peptidyl-prolyl cis-trans isomerase. The sequence is that of Trigger factor from Shewanella denitrificans (strain OS217 / ATCC BAA-1090 / DSM 15013).